The following is a 177-amino-acid chain: Bifunctional protein PyrR (177 aa).

Residues 99-111 carry the PRPP-binding motif; that stretch reads VILIDDVLYTGRT.

It belongs to the purine/pyrimidine phosphoribosyltransferase family. PyrR subfamily. Homodimer and homohexamer; in equilibrium.

It catalyses the reaction UMP + diphosphate = 5-phospho-alpha-D-ribose 1-diphosphate + uracil. Regulates transcriptional attenuation of the pyrimidine nucleotide (pyr) operon by binding in a uridine-dependent manner to specific sites on pyr mRNA. This disrupts an antiterminator hairpin in the RNA and favors formation of a downstream transcription terminator, leading to a reduced expression of downstream genes. In terms of biological role, also displays a weak uracil phosphoribosyltransferase activity which is not physiologically significant. This is Bifunctional protein PyrR from Pediococcus pentosaceus (strain ATCC 25745 / CCUG 21536 / LMG 10740 / 183-1w).